Reading from the N-terminus, the 587-residue chain is Probable pectinesterase/pectinesterase inhibitor 61 (587 aa).

The segment at 1 to 23 (MGYDRLGPSGPSNPNQKDPATSL) is disordered. The segment covering 10-19 (GPSNPNQKDP) has biased composition (polar residues). A helical transmembrane segment spans residues 35–55 (ILFTLAVLVVGVVCFGIFAGI). A pectinesterase inhibitor 61 region spans residues 69 to 223 (RKPTQAISRT…SEMVSNCLAI (155 aa)). A pectinesterase 61 region spans residues 273–571 (DITVSKDGSG…FTVAQFISGS (299 aa)). Substrate contacts are provided by threonine 349 and glutamine 379. Aspartate 402 serves as the catalytic Proton donor; for pectinesterase activity. A disulfide bridge links cysteine 416 with cysteine 436. The active-site Nucleophile; for pectinesterase activity is the aspartate 423. The substrate site is built by arginine 491 and tryptophan 493.

The protein in the N-terminal section; belongs to the PMEI family. This sequence in the C-terminal section; belongs to the pectinesterase family. Expressed in siliques, floral stems and rosettes leaves.

It is found in the membrane. It catalyses the reaction [(1-&gt;4)-alpha-D-galacturonosyl methyl ester](n) + n H2O = [(1-&gt;4)-alpha-D-galacturonosyl](n) + n methanol + n H(+). It participates in glycan metabolism; pectin degradation; 2-dehydro-3-deoxy-D-gluconate from pectin: step 1/5. Acts in the modification of cell walls via demethylesterification of cell wall pectin. The sequence is that of Probable pectinesterase/pectinesterase inhibitor 61 (PME61) from Arabidopsis thaliana (Mouse-ear cress).